Here is a 389-residue protein sequence, read N- to C-terminus: Chorismate synthase (389 aa).

2 residues coordinate NADP(+): Arg40 and Arg46. FMN contacts are provided by residues 131–133, 252–253, Gly297, 312–316, and Arg338; these read RSS, NA, and KPIPT.

The protein belongs to the chorismate synthase family. As to quaternary structure, homotetramer. Requires FMNH2 as cofactor.

The enzyme catalyses 5-O-(1-carboxyvinyl)-3-phosphoshikimate = chorismate + phosphate. It functions in the pathway metabolic intermediate biosynthesis; chorismate biosynthesis; chorismate from D-erythrose 4-phosphate and phosphoenolpyruvate: step 7/7. Its function is as follows. Catalyzes the anti-1,4-elimination of the C-3 phosphate and the C-6 proR hydrogen from 5-enolpyruvylshikimate-3-phosphate (EPSP) to yield chorismate, which is the branch point compound that serves as the starting substrate for the three terminal pathways of aromatic amino acid biosynthesis. This reaction introduces a second double bond into the aromatic ring system. The chain is Chorismate synthase from Lactiplantibacillus plantarum (strain ATCC BAA-793 / NCIMB 8826 / WCFS1) (Lactobacillus plantarum).